Here is a 125-residue protein sequence, read N- to C-terminus: Diol dehydratase-reactivating factor small subunit (125 aa).

Glu-31 is a Mg(2+) binding site.

It belongs to the DdrB/PduH family. Component of the DDR complex, a heterotetramer of DdrA(2)/DdrB(2). The DDR complex interacts with the diol dehydratase complex in the presence of ADP but not ATP. Mg(2+) serves as cofactor.

The enzyme catalyses ATP + H2O = ADP + phosphate + H(+). In terms of biological role, small subunit of the diol dehydratase-reactivating factor (DDR), which reactivates suicidally inhibited adenosylcobalamin-dependent diol dehydratase (DD, pddA, pddB, pddC). DDR acts as a chaperone, reactivates inactivated DD holoenzyme in the presence of ATP, Mg(2+) and free adenosylcobalamin (AdoCbl), by mediating the exchange of the tightly bound damaged cofactor AdoCbl for a free intact one. Reactivation takes place in two steps: ADP-dependent cobalamin release, and ATP-dependent dissociation of the DD apoenzyme-DDR complex. DDR has weak ATPase activity which is required for DD reactivation. Activates glycerol-inactivated, O2-inactivated holoenzyme and inactivated enzyme-cyanocobalamin complex. Also reactivates glycerol-inactivated hologlycerol dehydratase, a DD isozyme. The protein is Diol dehydratase-reactivating factor small subunit of Klebsiella michiganensis (strain ATCC 8724 / DSM 4798 / JCM 20051 / NBRC 3318 / NRRL B-199 / KCTC 1686 / BUCSAV 143 / CCM 1901).